A 901-amino-acid chain; its full sequence is Quinate repressor protein (901 aa).

The sufficient for repression stretch occupies residues 1 to 88 (MSILVRPPKR…DSLQTRRKFP (88 aa)). Disordered regions lie at residues 26–59 (LRDF…DGSR) and 878–901 (EEQG…GQPM). The span at 31 to 43 (QGNSASTPINTSA) shows a compositional bias: polar residues.

It in the N-terminal section; belongs to the shikimate kinase family. This sequence in the 2nd section; belongs to the type-I 3-dehydroquinase family. In the C-terminal section; belongs to the shikimate dehydrogenase family. As to quaternary structure, interacts with qutA; transcriptional activator of the quinate utilization pathway genes.

Functionally, multi-domain repressor protein that negatively regulates transcription of the quinate utilization pathway genes. May mediate its repressor activity by binding directly to the qutA activator protein. The polypeptide is Quinate repressor protein (qutR) (Emericella nidulans (strain FGSC A4 / ATCC 38163 / CBS 112.46 / NRRL 194 / M139) (Aspergillus nidulans)).